Consider the following 943-residue polypeptide: Isoleucine--tRNA ligase (943 aa).

The short motif at 59-69 (PYANGQIHLGH) is the 'HIGH' region element. Glu-577 serves as a coordination point for L-isoleucyl-5'-AMP. A 'KMSKS' region motif is present at residues 618–622 (KMSKS). Lys-621 is a binding site for ATP. Zn(2+)-binding residues include Cys-906, Cys-909, Cys-926, and Cys-929.

This sequence belongs to the class-I aminoacyl-tRNA synthetase family. IleS type 1 subfamily. As to quaternary structure, monomer. It depends on Zn(2+) as a cofactor.

Its subcellular location is the cytoplasm. It catalyses the reaction tRNA(Ile) + L-isoleucine + ATP = L-isoleucyl-tRNA(Ile) + AMP + diphosphate. Its function is as follows. Catalyzes the attachment of isoleucine to tRNA(Ile). As IleRS can inadvertently accommodate and process structurally similar amino acids such as valine, to avoid such errors it has two additional distinct tRNA(Ile)-dependent editing activities. One activity is designated as 'pretransfer' editing and involves the hydrolysis of activated Val-AMP. The other activity is designated 'posttransfer' editing and involves deacylation of mischarged Val-tRNA(Ile). The protein is Isoleucine--tRNA ligase of Xanthomonas campestris pv. campestris (strain B100).